A 120-amino-acid chain; its full sequence is PYEKIGAELVKEVAKKTDDVAGDGTTTATVLAQALVKEGLRNVAAGANPLALKRGIEKAVEKVTETLLKTAKEVETKEQIAATAAISAGDQAIGDLIAEAMDKVGNEGVITVEESNTFGL.

23–27 (DGTTT) is a binding site for ATP.

It belongs to the chaperonin (HSP60) family. Forms a cylinder of 14 subunits composed of two heptameric rings stacked back-to-back. Interacts with the co-chaperonin GroES.

It is found in the cytoplasm. The enzyme catalyses ATP + H2O + a folded polypeptide = ADP + phosphate + an unfolded polypeptide.. Its function is as follows. Together with its co-chaperonin GroES, plays an essential role in assisting protein folding. The GroEL-GroES system forms a nano-cage that allows encapsulation of the non-native substrate proteins and provides a physical environment optimized to promote and accelerate protein folding. The sequence is that of Chaperonin GroEL from Mycobacterium xenopi.